The primary structure comprises 65 residues: Large ribosomal subunit protein bL35 (65 aa).

The disordered stretch occupies residues 1-30 (MPKMKTVSGAAKRFKKTGSGRFKSKQSHLR). Residues 12–30 (KRFKKTGSGRFKSKQSHLR) show a composition bias toward basic residues.

The protein belongs to the bacterial ribosomal protein bL35 family.

This chain is Large ribosomal subunit protein bL35, found in Alteromonas mediterranea (strain DSM 17117 / CIP 110805 / LMG 28347 / Deep ecotype).